The chain runs to 201 residues: uncharacterized protein (201 aa).

The interval 53–74 (PKKNTAHKNSTTSTVASSGNTT) is disordered. Residues 59 to 74 (HKNSTTSTVASSGNTT) show a composition bias toward polar residues. The bHLH domain maps to 88 to 136 (AKRLSHKEVERRRREAISEGIKELANIVPGCEKNKGSILQRTAQYIRSL).

The protein localises to the nucleus. This is an uncharacterized protein from Schizosaccharomyces pombe (strain 972 / ATCC 24843) (Fission yeast).